We begin with the raw amino-acid sequence, 982 residues long: Serine/threonine-protein kinase ATG1 (982 aa).

The Protein kinase domain maps to 19 to 324 (FVIGAEIGKG…FENFFAHPVI (306 aa)). ATP contacts are provided by residues 25–33 (IGKGSFAQV) and K48. D162 (proton acceptor) is an active-site residue. Disordered regions lie at residues 334–506 (DDIP…REKA), 813–834 (RLPD…SVNG), 898–918 (PKRR…DGHA), and 947–982 (RMIS…SYSS). 2 stretches are compositionally biased toward basic and acidic residues: residues 335–359 (DIPK…KSDD) and 372–387 (HPTD…RRVE). Residues 388 to 398 (PPSSAAESAPS) show a composition bias toward low complexity. The segment covering 463–481 (SNASLNRSNRESSSPTSAA) has biased composition (polar residues).

Belongs to the protein kinase superfamily. Ser/Thr protein kinase family. APG1/unc-51/ULK1 subfamily. As to quaternary structure, homodimer. Forms a ternary complex with ATG13 and ATG17. Uniformly detected in conidia, mycelia and appressoria (at protein level).

It localises to the cytoplasm. It is found in the preautophagosomal structure membrane. The enzyme catalyses L-seryl-[protein] + ATP = O-phospho-L-seryl-[protein] + ADP + H(+). The catalysed reaction is L-threonyl-[protein] + ATP = O-phospho-L-threonyl-[protein] + ADP + H(+). Serine/threonine protein kinase involved in the cytoplasm to vacuole transport (Cvt) and found to be essential in autophagy, where it is required for the formation of autophagosomes. Involved in the clearance of protein aggregates which cannot be efficiently cleared by the proteasome. Required for selective autophagic degradation of the nucleus (nucleophagy) as well as for mitophagy which contributes to regulate mitochondrial quantity and quality by eliminating the mitochondria to a basal level to fulfill cellular energy requirements and preventing excess ROS production. Also involved in endoplasmic reticulum-specific autophagic process, in selective removal of ER-associated degradation (ERAD) substrates. Plays a key role in ATG9 and ATG23 cycling through the pre-autophagosomal structure and is necessary to promote ATG18 binding to ATG9 through phosphorylation of ATG9. Catalyzes phosphorylation of ATG4, decreasing the interaction between ATG4 and ATG8 and impairing deconjugation of PE-conjugated forms of ATG8. Autophagy is essential to fungal development, production of appressorium turgor, and pathogenicity in rice blast disease. The protein is Serine/threonine-protein kinase ATG1 of Pyricularia oryzae (strain 70-15 / ATCC MYA-4617 / FGSC 8958) (Rice blast fungus).